We begin with the raw amino-acid sequence, 487 residues long: ATP-dependent RNA helicase DBP3 (487 aa).

Positions 1–40 (MAKRSRNMESNSERSSRPKKKSKGDAKPEQPPYVQSAELD) are disordered. The Q motif motif lies at 71-98 (TAFSYLPSDSNQLYGPLEHFSKPTPIQS). The 176-residue stretch at 101 to 276 (WPYLFAGRDV…TTFMKEPVTV (176 aa)) folds into the Helicase ATP-binding domain. Position 114–121 (114–121 (AETGSGKT)) interacts with ATP. The DEAD box motif lies at 222–225 (DEAD). The Helicase C-terminal domain maps to 291-456 (RIKQIVEVVK…DIPEALLKFG (166 aa)).

Belongs to the DEAD box helicase family. DDX5/DBP2 subfamily.

The protein resides in the nucleus. Its subcellular location is the nucleolus. It carries out the reaction ATP + H2O = ADP + phosphate + H(+). Functionally, ATP-dependent RNA helicase required for 60S ribosomal subunit synthesis. Involved in efficient pre-rRNA processing, predominantly at site A3, which is necessary for the normal formation of 25S and 5.8S rRNAs. The polypeptide is ATP-dependent RNA helicase DBP3 (DBP3) (Ajellomyces capsulatus (strain NAm1 / WU24) (Darling's disease fungus)).